The sequence spans 397 residues: Lysophospholipid transporter LplT (397 aa).

Residues 1 to 17 (MSESVHTNTSLWSKGMK) lie on the Periplasmic side of the membrane. A helical membrane pass occupies residues 18–38 (AVIVAQFLSAFGDNALLFATL). The Cytoplasmic segment spans residues 39–52 (ALLKAQFYPEWSQP). The helical transmembrane segment at 53–73 (ILQMVFVGAYILFAPFVGQVA) threads the bilayer. Over 74–90 (DSFAKGRVMMFANGLKL) the chain is Periplasmic. A helical membrane pass occupies residues 91–111 (LGAASICFGINPFLGYTLVGV). At 112–144 (GAAAYSPAKYGILGELTTGSKLVKANGLMEAST) the chain is on the cytoplasmic side. A helical membrane pass occupies residues 145-165 (IAAILLGSVAGGVLADWHVLV). Position 166 (A166) is a topological domain, periplasmic. The helical transmembrane segment at 167 to 187 (LAACALAYGGAVVANIYIPKL) threads the bilayer. The Cytoplasmic portion of the chain corresponds to 188–226 (AAARPGQSWNLINMTRSFLNACTSLWRNGETRFSLVGTS). A helical membrane pass occupies residues 227–247 (LFWGAGVTLRFLLVLWVPVAL). The Periplasmic portion of the chain corresponds to 248 to 256 (GITDNATPT). Residues 257-277 (YLNAMVAIGIVVGAGAAAKLV) form a helical membrane-spanning segment. The Cytoplasmic portion of the chain corresponds to 278–280 (TLE). A helical transmembrane segment spans residues 281–301 (TVSRCMPAGILIGVVVLIFSL). Topologically, residues 302-304 (QHE) are periplasmic. A helical membrane pass occupies residues 305–325 (LLPAYALLMLIGVLGGFFVVP). Topologically, residues 326–343 (LNALLQERGKKSVGAGNA) are cytoplasmic. A helical membrane pass occupies residues 344-364 (IAVQNLGENSAMLLMLGIYSL). The Periplasmic segment spans residues 365 to 366 (AV). A helical membrane pass occupies residues 367–387 (MVGIPVVPIGIGFGALFALAI). Residues 388–397 (TALWIWQRRY) lie on the Cytoplasmic side of the membrane.

Belongs to the major facilitator superfamily. LplT (TC 2.A.1.42) family.

The protein resides in the cell inner membrane. Catalyzes the facilitated diffusion of 2-acyl-glycero-3-phosphoethanolamine (2-acyl-GPE) into the cell. The polypeptide is Lysophospholipid transporter LplT (Escherichia coli O127:H6 (strain E2348/69 / EPEC)).